The following is a 140-amino-acid chain: ATP synthase epsilon chain (140 aa).

This sequence belongs to the ATPase epsilon chain family. F-type ATPases have 2 components, CF(1) - the catalytic core - and CF(0) - the membrane proton channel. CF(1) has five subunits: alpha(3), beta(3), gamma(1), delta(1), epsilon(1). CF(0) has three main subunits: a, b and c.

It localises to the cell inner membrane. Produces ATP from ADP in the presence of a proton gradient across the membrane. The polypeptide is ATP synthase epsilon chain (Janthinobacterium sp. (strain Marseille) (Minibacterium massiliensis)).